A 214-amino-acid chain; its full sequence is uncharacterized protein (214 aa).

A helical membrane pass occupies residues 10–30 (LLLAGIGGFMVGGLASWVVSS). Residues 147-157 (SSQANSQSTQP) show a composition bias toward polar residues. The interval 147 to 166 (SSQANSQSTQPRDPIPTENF) is disordered.

Its subcellular location is the membrane. This is an uncharacterized protein from Schizosaccharomyces pombe (strain 972 / ATCC 24843) (Fission yeast).